Consider the following 211-residue polypeptide: MPHGHSHDHGGCSHEASDVDHALEMGIEYSLYTKIDLDNVECLNEETDGQGKSVFKPYEKRQDLSKYVESDADEELLFNIPFTGNIKLKGIIISGANDDSHPNMVKIFKNRPRMTFDDARAKPDQEFQLTRDARGEIEYSPKVVTFSSVHHLSLYFPSNFGEDITRIYYIGLRGEFTEAHYHGVTICNYESRANAADHKEKAFDGVGRAIQ.

One can recognise a PITH domain in the interval 20-192; it reads DHALEMGIEY…GVTICNYESR (173 aa).

The protein belongs to the PITHD1 family.

The sequence is that of PITH domain-containing protein CG6153 from Drosophila melanogaster (Fruit fly).